The primary structure comprises 589 residues: Formate--tetrahydrofolate ligase (589 aa).

Position 74-81 (74-81) interacts with ATP; the sequence is TPFGEGKS.

It belongs to the formate--tetrahydrofolate ligase family.

The catalysed reaction is (6S)-5,6,7,8-tetrahydrofolate + formate + ATP = (6R)-10-formyltetrahydrofolate + ADP + phosphate. Its pathway is one-carbon metabolism; tetrahydrofolate interconversion. This chain is Formate--tetrahydrofolate ligase, found in Thermodesulfovibrio yellowstonii (strain ATCC 51303 / DSM 11347 / YP87).